Here is a 372-residue protein sequence, read N- to C-terminus: N-methyl-L-tryptophan oxidase (372 aa).

An FAD-binding site is contributed by aspartate 4 to histidine 34. Cysteine 308 is subject to S-8alpha-FAD cysteine.

This sequence belongs to the MSOX/MTOX family. MTOX subfamily. In terms of assembly, monomer. The cofactor is FAD.

It carries out the reaction N(alpha)-methyl-L-tryptophan + O2 + H2O = L-tryptophan + formaldehyde + H2O2. Its function is as follows. Catalyzes the oxidative demethylation of N-methyl-L-tryptophan. The chain is N-methyl-L-tryptophan oxidase from Escherichia coli O139:H28 (strain E24377A / ETEC).